A 118-amino-acid chain; its full sequence is Putative pterin-4-alpha-carbinolamine dehydratase (118 aa).

It belongs to the pterin-4-alpha-carbinolamine dehydratase family.

The catalysed reaction is (4aS,6R)-4a-hydroxy-L-erythro-5,6,7,8-tetrahydrobiopterin = (6R)-L-erythro-6,7-dihydrobiopterin + H2O. The protein is Putative pterin-4-alpha-carbinolamine dehydratase of Xanthomonas euvesicatoria pv. vesicatoria (strain 85-10) (Xanthomonas campestris pv. vesicatoria).